A 66-amino-acid polypeptide reads, in one-letter code: Large ribosomal subunit protein bL35 (66 aa).

It belongs to the bacterial ribosomal protein bL35 family.

The chain is Large ribosomal subunit protein bL35 from Thermodesulfovibrio yellowstonii (strain ATCC 51303 / DSM 11347 / YP87).